The chain runs to 395 residues: F-box/kelch-repeat protein SKIP25 (395 aa).

Residues 1–29 are disordered; that stretch reads MEKKLKRRESMSTTAAESPPAKRRRTVTG. Residues 34–79 enclose the F-box domain; it reads ALIEGLPDHISEICLSLVHRPSLLSAVCTRWRRLLYSPEFPSFPSL. Kelch repeat units lie at residues 81–129, 147–194, 196–245, 246–299, and 301–342; these read ALFV…YRHP, LILI…ACDG, IYIA…FSRE, AIDA…AMEE, and ILYS…TQVT.

In terms of assembly, part of a SCF (ASK-cullin-F-box) protein ligase complex. Interacts with SKP1A/ASK1.

It is found in the nucleus. Its pathway is protein modification; protein ubiquitination. Functionally, component of SCF(ASK-cullin-F-box) E3 ubiquitin ligase complexes, which may mediate the ubiquitination and subsequent proteasomal degradation of target proteins. The sequence is that of F-box/kelch-repeat protein SKIP25 (SKIP25) from Arabidopsis thaliana (Mouse-ear cress).